The primary structure comprises 149 residues: Probable calcium-binding protein CML25/26 (149 aa).

4 EF-hand domains span residues 1–35 (MASS…ALGE), 37–72 (VSEE…HQLQ), 77–113 (ESLR…LGSE), and 117–149 (LEME…MLMA). The Ca(2+) site is built by aspartate 13, aspartate 15, aspartate 17, lysine 19, glutamate 24, aspartate 50, aspartate 52, aspartate 54, and glutamate 61. Ca(2+) contacts are provided by aspartate 130, asparagine 132, aspartate 134, and glutamate 141.

Its function is as follows. Potential calcium sensor. The sequence is that of Probable calcium-binding protein CML25/26 (CML25) from Oryza sativa subsp. japonica (Rice).